The chain runs to 460 residues: Chromosomal replication initiator protein DnaA (460 aa).

The interval 1 to 91 is domain I, interacts with DnaA modulators; that stretch reads MSLINPKVSA…LLWQNEDKSI (91 aa). The segment at 91–122 is domain II; that stretch reads ICSIDIQVTEEKNSSSSIISKNKEESVNNLGS. A domain III, AAA+ region region spans residues 123-342; it reads PLDPRFTFDN…GALNKVAHTS (220 aa). ATP contacts are provided by glycine 169, glycine 171, lysine 172, and threonine 173. Positions 343–460 are domain IV, binds dsDNA; the sequence is LIGRSMTVES…EINQLRKMFK (118 aa).

It belongs to the DnaA family. As to quaternary structure, oligomerizes as a right-handed, spiral filament on DNA at oriC.

The protein localises to the cytoplasm. Plays an essential role in the initiation and regulation of chromosomal replication. ATP-DnaA binds to the origin of replication (oriC) to initiate formation of the DNA replication initiation complex once per cell cycle. Binds the DnaA box (a 9 base pair repeat at the origin) and separates the double-stranded (ds)DNA. Forms a right-handed helical filament on oriC DNA; dsDNA binds to the exterior of the filament while single-stranded (ss)DNA is stabiized in the filament's interior. The ATP-DnaA-oriC complex binds and stabilizes one strand of the AT-rich DNA unwinding element (DUE), permitting loading of DNA polymerase. After initiation quickly degrades to an ADP-DnaA complex that is not apt for DNA replication. Binds acidic phospholipids. This chain is Chromosomal replication initiator protein DnaA, found in Wolbachia sp. subsp. Brugia malayi (strain TRS).